Consider the following 106-residue polypeptide: Nucleoid-associated protein XC_3243 (106 aa).

Residues 82 to 106 are disordered; it reads DAESKERMGSATAGMQLPPGMKLPF.

This sequence belongs to the YbaB/EbfC family. As to quaternary structure, homodimer.

Its subcellular location is the cytoplasm. It is found in the nucleoid. In terms of biological role, binds to DNA and alters its conformation. May be involved in regulation of gene expression, nucleoid organization and DNA protection. The polypeptide is Nucleoid-associated protein XC_3243 (Xanthomonas campestris pv. campestris (strain 8004)).